Consider the following 360-residue polypeptide: MKASLLNKLDVLSDRFEELTALLGDAEVISDQTRFRAYSREYAEVEPVVALYKQLARVQGDLEGAQALLKDSDPDMREMAVEEVRETKQQLVELEAQLQRMLLPKDPNDGRNVFLEIRAGTGGDEAAIFSGDLFRMYSRYAERRGWRVEILSENEGEHGGYKEVIARVEGDSVYGKLKFESGAHRVQRVPKTESQGRIHTSACTVAVLPEPDEQQAIEINPADLRVDTYRSSGAGGQHVNKTDSAIRITHLPSGIVVECQEERSQHKNRARAMSWLSAKLNDQQTSAAASAIASERKLLVGSGDRSERIRTYNFPQGRVTDHRVNLTLYSLDEVLAGGVDAVIEPLLAEYQADQLAALGE.

The residue at position 237 (Gln237) is an N5-methylglutamine.

It belongs to the prokaryotic/mitochondrial release factor family. Methylated by PrmC. Methylation increases the termination efficiency of RF1.

It localises to the cytoplasm. In terms of biological role, peptide chain release factor 1 directs the termination of translation in response to the peptide chain termination codons UAG and UAA. This is Peptide chain release factor 1 from Pseudomonas syringae pv. tomato (strain ATCC BAA-871 / DC3000).